Consider the following 121-residue polypeptide: MARIAGVDIPRDKRVVISLTYVFGIGRTTAEKILAEAGISEETRVRDLTEDELGRIRDIIDRIKVEGDLRREVSLNIKRLMEIGSYRGLRHRRGLPVRGQNSKNNARTRKGPRRTVANKKK.

A disordered region spans residues 91–121; sequence HRRGLPVRGQNSKNNARTRKGPRRTVANKKK. The segment covering 106 to 121 has biased composition (basic residues); it reads ARTRKGPRRTVANKKK.

Belongs to the universal ribosomal protein uS13 family. As to quaternary structure, part of the 30S ribosomal subunit. Forms a loose heterodimer with protein S19. Forms two bridges to the 50S subunit in the 70S ribosome.

In terms of biological role, located at the top of the head of the 30S subunit, it contacts several helices of the 16S rRNA. In the 70S ribosome it contacts the 23S rRNA (bridge B1a) and protein L5 of the 50S subunit (bridge B1b), connecting the 2 subunits; these bridges are implicated in subunit movement. Contacts the tRNAs in the A and P-sites. The protein is Small ribosomal subunit protein uS13 of Bacillus cereus (strain ZK / E33L).